Consider the following 498-residue polypeptide: Isoflavone 2'-hydroxylase (498 aa).

The helical transmembrane segment at 3–23 (ILSYLCYSLFYLSIFFIIRLL) threads the bilayer. C436 serves as a coordination point for heme.

This sequence belongs to the cytochrome P450 family. It depends on heme as a cofactor. As to expression, expressed constitutively in roots, but present at very low levels in uninfected stems and leaves.

The protein resides in the endoplasmic reticulum membrane. The enzyme catalyses formononetin + reduced [NADPH--hemoprotein reductase] + O2 = 2'-hydroxyformononetin + oxidized [NADPH--hemoprotein reductase] + H2O + H(+). Involved in the biosynthesis of the pterocarpin phytoalexins. Acts on isoflavones with a 4'-methoxy group on the B-ring, such as formononetin and biochanin A, and on pseudobaptigenin. Has a low activity with daidzein and genistein and no activity with the 7-O-methylated isoflavonoids isoformononetin and prunetin. This Medicago truncatula (Barrel medic) protein is Isoflavone 2'-hydroxylase.